We begin with the raw amino-acid sequence, 388 residues long: Succinate--CoA ligase [ADP-forming] subunit beta (388 aa).

One can recognise an ATP-grasp domain in the interval Lys9 to His244. ATP-binding positions include Lys46, Gly53–Gly55, Glu99, Thr102, and Glu107. Residues Asn199 and Asp213 each coordinate Mg(2+). Substrate contacts are provided by residues Asn264 and Gly321–Val323.

Belongs to the succinate/malate CoA ligase beta subunit family. In terms of assembly, heterotetramer of two alpha and two beta subunits. Requires Mg(2+) as cofactor.

It catalyses the reaction succinate + ATP + CoA = succinyl-CoA + ADP + phosphate. The catalysed reaction is GTP + succinate + CoA = succinyl-CoA + GDP + phosphate. The protein operates within carbohydrate metabolism; tricarboxylic acid cycle; succinate from succinyl-CoA (ligase route): step 1/1. Its function is as follows. Succinyl-CoA synthetase functions in the citric acid cycle (TCA), coupling the hydrolysis of succinyl-CoA to the synthesis of either ATP or GTP and thus represents the only step of substrate-level phosphorylation in the TCA. The beta subunit provides nucleotide specificity of the enzyme and binds the substrate succinate, while the binding sites for coenzyme A and phosphate are found in the alpha subunit. The chain is Succinate--CoA ligase [ADP-forming] subunit beta from Colwellia psychrerythraea (strain 34H / ATCC BAA-681) (Vibrio psychroerythus).